Here is a 192-residue protein sequence, read N- to C-terminus: Inner membrane protein YohD (192 aa).

Topologically, residues 1-40 (MDLNTLISQYGYAALVIGSLAEGETVTLLGGVAAHQGLLK) are periplasmic. A helical membrane pass occupies residues 41-61 (FPLVVLSVALGGMIGDQVLYL). The Cytoplasmic segment spans residues 62 to 121 (CGRRFGGKLLRRFSKHQDKIERAQKLIQRHPYLFVIGTRFMYGFRVIGPTLIGASQLPPK). Residues 122–142 (IFLPLNILGAFAWALIFTTIG) form a helical membrane-spanning segment. Topologically, residues 143–159 (YAGGQVIAPWLHNLDQH) are periplasmic. A helical membrane pass occupies residues 160-180 (LKHWVWLILVVVLVVGVRWWL). At 181 to 192 (KRRGKKKPDHQA) the chain is on the cytoplasmic side.

This sequence belongs to the DedA family.

The protein resides in the cell inner membrane. In Escherichia coli (strain K12), this protein is Inner membrane protein YohD (yohD).